We begin with the raw amino-acid sequence, 150 residues long: MAGKFHILLLNGPNLNMLGTREPDIYGSLTLDDIVSKLSEEAHQSGVKFSHLQSNAEFELINRIHSAQGNTDFILINPAAFTHTSVALRDALLTVKIPFIEIHLSNVHAREPFRHHSYLSDLAVGVICGLGVDGYSFALQAAVNRLSKFN.

Y26 functions as the Proton acceptor in the catalytic mechanism. Positions 77, 83, and 90 each coordinate substrate. H103 acts as the Proton donor in catalysis. Substrate-binding positions include 104–105 and R114; that span reads LS.

It belongs to the type-II 3-dehydroquinase family. Homododecamer.

It catalyses the reaction 3-dehydroquinate = 3-dehydroshikimate + H2O. The protein operates within metabolic intermediate biosynthesis; chorismate biosynthesis; chorismate from D-erythrose 4-phosphate and phosphoenolpyruvate: step 3/7. In terms of biological role, catalyzes a trans-dehydration via an enolate intermediate. This Photorhabdus laumondii subsp. laumondii (strain DSM 15139 / CIP 105565 / TT01) (Photorhabdus luminescens subsp. laumondii) protein is 3-dehydroquinate dehydratase.